Consider the following 433-residue polypeptide: Steroid hormone receptor ERR2 (433 aa).

Residues 1–38 are disordered; sequence MSSEDRHLGSSCGSFIKTEPSSPSSGIDALSHHSPSGS. The interaction with NANOG stretch occupies residues 93-211; it reads YMLNAIPKRL…SPPAKKPLTK (119 aa). Positions 100–186 form a DNA-binding region, nuclear receptor; that stretch reads KRLCLVCGDI…RVRGGRQKYK (87 aa). 2 NR C4-type zinc fingers span residues 103 to 123 and 139 to 163; these read CLVCGDIASGYHYGVASCEAC and CPATNECEITKRRRKSCQACRFMKC. The tract at residues 203-433 is essential for ESRRB transcriptional activity and interaction with NCOA3; that stretch reads PPAKKPLTKI…LFLEMLEAKV (231 aa). An NR LBD domain is found at 208-432; the sequence is PLTKIVSNLL…KLFLEMLEAK (225 aa).

The protein belongs to the nuclear hormone receptor family. NR3 subfamily. As to quaternary structure, binds DNA as a monomer. Interacts with NR0B1; represses ESRRB activity at the GATA6 promoter. Interacts with NANOG; reciprocally modulates their transcriptional activities and activates POU5F1 expression. Interacts with NCOA3; mediates the interaction between ESRRB and RNA polymerase II complexes and allows NCOA3 corecruitment to ESRRB, KLF4, NANOG, and SOX2 enhancer regions to trigger ESRRB-dependent gene activation involved in self-renewal and pluripotency. Interacts with KDM1A; co-occupes the core set of ESRRB targets including ELF5 and EOMES. Interacts with the multiprotein complex Integrator, at least composed of INTS1, INTS2, INTS3, INTS4, INTS5, INTS6, INTS7, INTS8, INTS9/RC74, INTS10, INTS11/CPSF3L and INTS12; ESRRB is probably not a core component of the integrator complex and associates to integrator via its interaction with INTS1 and INTS9; attracts the transcriptional machinery. Interacts with JARID2. Interacts with POU5F1; recruits ESRRB near the POU5F1-SOX2 element in the NANOG proximal promoter leading to activation of NANOG expression; the interaction is DNA independent. Acetylated by PCAF/KAT2 (in vitro). In terms of tissue distribution, highly expressed in undifferentiated ESCs. Expressed in immature horizontal cells and in rod photoreceptors at intermediate and late stages of differentiation. Expressed in endolymph-producing epithelial cells.

Its subcellular location is the nucleus. It localises to the cytoplasm. It is found in the chromosome. Functionally, transcription factor that binds a canonical ESRRB recognition (ERRE) sequence 5'TCAAGGTCA-3' localized on promoter and enhancer of targets genes regulating their expression or their transcriptional activity. Plays a role, in a LIF-independent manner, in maintainance of self-renewal and pluripotency of embryonic and trophoblast stem cells through different signaling pathways including FGF signaling pathway and Wnt signaling pathways. Involved in morula development (2-16 cells embryos) by acting as a regulator at the 8-cell stage. Upon FGF signaling pathway activation, interacts with KDM1A by directly binding to enhancer site of ELF5 and EOMES and activating their transcription leading to self-renewal of trophoblast stem cells. Also regulates expression of multiple rod-specific genes and is required for survival of this cell type. Plays a role as transcription factor activator of GATA6, NR0B1, POU5F1 and PERM1. Plays a role as transcription factor repressor of NFE2L2 transcriptional activity and ESR1 transcriptional activity. During mitosis remains bound to a subset of interphase target genes, including pluripotency regulators, through the canonical ESRRB recognition (ERRE) sequence, leading to their transcriptional activation in early G1 phase. Can coassemble on structured DNA elements with other transcription factors like SOX2, POU5F1, KDM1A and NCOA3 to trigger ESRRB-dependent gene activation. This mechanism, in the case of SOX2 corecruitment prevents the embryonic stem cells (ESCs) to epiblast stem cells (EpiSC) transition through positive regulation of NR0B1 that inhibits the EpiSC transcriptional program. Also plays a role inner ear development by controlling expression of ion channels and transporters and in early placentation. This is Steroid hormone receptor ERR2 from Mus musculus (Mouse).